A 235-amino-acid polypeptide reads, in one-letter code: Ribosomal RNA small subunit methyltransferase G (235 aa).

S-adenosyl-L-methionine-binding positions include Gly74, Phe79, 97–99 (EAT), 125–126 (AE), and Arg144.

This sequence belongs to the methyltransferase superfamily. RNA methyltransferase RsmG family.

It localises to the cytoplasm. Functionally, specifically methylates the N7 position of a guanine in 16S rRNA. In Dehalococcoides mccartyi (strain CBDB1), this protein is Ribosomal RNA small subunit methyltransferase G.